A 443-amino-acid polypeptide reads, in one-letter code: Proline--tRNA ligase (443 aa).

It belongs to the class-II aminoacyl-tRNA synthetase family. ProS type 2 subfamily. Homodimer.

The protein localises to the cytoplasm. It carries out the reaction tRNA(Pro) + L-proline + ATP = L-prolyl-tRNA(Pro) + AMP + diphosphate. Functionally, catalyzes the attachment of proline to tRNA(Pro) in a two-step reaction: proline is first activated by ATP to form Pro-AMP and then transferred to the acceptor end of tRNA(Pro). The polypeptide is Proline--tRNA ligase (Caulobacter vibrioides (strain ATCC 19089 / CIP 103742 / CB 15) (Caulobacter crescentus)).